The primary structure comprises 70 residues: DNA-directed RNA polymerase subunit omega (70 aa).

This sequence belongs to the RNA polymerase subunit omega family. The RNAP catalytic core consists of 2 alpha, 1 beta, 1 beta' and 1 omega subunit. When a sigma factor is associated with the core the holoenzyme is formed, which can initiate transcription.

The enzyme catalyses RNA(n) + a ribonucleoside 5'-triphosphate = RNA(n+1) + diphosphate. Functionally, promotes RNA polymerase assembly. Latches the N- and C-terminal regions of the beta' subunit thereby facilitating its interaction with the beta and alpha subunits. This is DNA-directed RNA polymerase subunit omega from Thermoanaerobacter pseudethanolicus (strain ATCC 33223 / 39E) (Clostridium thermohydrosulfuricum).